Consider the following 319-residue polypeptide: F-box only protein 8 (319 aa).

An F-box domain is found at 68–111 (FINLEMLPPELSFTILSYLNATDLCLASCVWQDLANDELLWQGL). Positions 146 to 276 (FNANPDEGVN…LILLSIDLTS (131 aa)) constitute an SEC7 domain.

Functionally, may promote guanine-nucleotide exchange on an ARF. Promotes the activation of ARF through replacement of GDP with GTP (Potential). This is F-box only protein 8 (FBXO8) from Homo sapiens (Human).